The following is a 117-amino-acid chain: Large ribosomal subunit protein bL20 (117 aa).

It belongs to the bacterial ribosomal protein bL20 family.

Its function is as follows. Binds directly to 23S ribosomal RNA and is necessary for the in vitro assembly process of the 50S ribosomal subunit. It is not involved in the protein synthesizing functions of that subunit. This is Large ribosomal subunit protein bL20 from Pelobacter propionicus (strain DSM 2379 / NBRC 103807 / OttBd1).